A 352-amino-acid polypeptide reads, in one-letter code: UDP-N-acetylglucosamine--N-acetylmuramyl-(pentapeptide) pyrophosphoryl-undecaprenol N-acetylglucosamine transferase 2 (352 aa).

Residues 11–13 (SAG), Arg-164, Ser-194, and Gln-289 contribute to the UDP-N-acetyl-alpha-D-glucosamine site.

Belongs to the glycosyltransferase 28 family. MurG subfamily.

Its subcellular location is the cell membrane. It catalyses the reaction di-trans,octa-cis-undecaprenyl diphospho-N-acetyl-alpha-D-muramoyl-L-alanyl-D-glutamyl-meso-2,6-diaminopimeloyl-D-alanyl-D-alanine + UDP-N-acetyl-alpha-D-glucosamine = di-trans,octa-cis-undecaprenyl diphospho-[N-acetyl-alpha-D-glucosaminyl-(1-&gt;4)]-N-acetyl-alpha-D-muramoyl-L-alanyl-D-glutamyl-meso-2,6-diaminopimeloyl-D-alanyl-D-alanine + UDP + H(+). The protein operates within cell wall biogenesis; peptidoglycan biosynthesis. Functionally, cell wall formation. Catalyzes the transfer of a GlcNAc subunit on undecaprenyl-pyrophosphoryl-MurNAc-pentapeptide (lipid intermediate I) to form undecaprenyl-pyrophosphoryl-MurNAc-(pentapeptide)GlcNAc (lipid intermediate II). The protein is UDP-N-acetylglucosamine--N-acetylmuramyl-(pentapeptide) pyrophosphoryl-undecaprenol N-acetylglucosamine transferase 2 of Bacillus cereus (strain ATCC 14579 / DSM 31 / CCUG 7414 / JCM 2152 / NBRC 15305 / NCIMB 9373 / NCTC 2599 / NRRL B-3711).